Reading from the N-terminus, the 366-residue chain is tRNA/tmRNA (uracil-C(5))-methyltransferase (366 aa).

Gln190, Tyr218, Asn223, Glu239, and Asp299 together coordinate S-adenosyl-L-methionine. Cys324 acts as the Nucleophile in catalysis. Catalysis depends on Glu358, which acts as the Proton acceptor.

This sequence belongs to the class I-like SAM-binding methyltransferase superfamily. RNA M5U methyltransferase family. TrmA subfamily.

The catalysed reaction is uridine(54) in tRNA + S-adenosyl-L-methionine = 5-methyluridine(54) in tRNA + S-adenosyl-L-homocysteine + H(+). The enzyme catalyses uridine(341) in tmRNA + S-adenosyl-L-methionine = 5-methyluridine(341) in tmRNA + S-adenosyl-L-homocysteine + H(+). Dual-specificity methyltransferase that catalyzes the formation of 5-methyluridine at position 54 (m5U54) in all tRNAs, and that of position 341 (m5U341) in tmRNA (transfer-mRNA). This chain is tRNA/tmRNA (uracil-C(5))-methyltransferase, found in Edwardsiella ictaluri (strain 93-146).